Reading from the N-terminus, the 116-residue chain is MRHQCRVPQLGRPADQRKAMLRALTTQLIREGRVTTTKARAKALRDEAERMITLAKDGSLASRRRALGYIYDKQLVHALFDKAPDRYSDRKGGYTRITRTVPRRGDNAEMAIIELV.

This sequence belongs to the bacterial ribosomal protein bL17 family. In terms of assembly, part of the 50S ribosomal subunit. Contacts protein L32.

This Parasynechococcus marenigrum (strain WH8102) protein is Large ribosomal subunit protein bL17.